Here is a 100-residue protein sequence, read N- to C-terminus: Aspartyl/glutamyl-tRNA(Asn/Gln) amidotransferase subunit C (100 aa).

Belongs to the GatC family. As to quaternary structure, heterotrimer of A, B and C subunits.

The catalysed reaction is L-glutamyl-tRNA(Gln) + L-glutamine + ATP + H2O = L-glutaminyl-tRNA(Gln) + L-glutamate + ADP + phosphate + H(+). It carries out the reaction L-aspartyl-tRNA(Asn) + L-glutamine + ATP + H2O = L-asparaginyl-tRNA(Asn) + L-glutamate + ADP + phosphate + 2 H(+). In terms of biological role, allows the formation of correctly charged Asn-tRNA(Asn) or Gln-tRNA(Gln) through the transamidation of misacylated Asp-tRNA(Asn) or Glu-tRNA(Gln) in organisms which lack either or both of asparaginyl-tRNA or glutaminyl-tRNA synthetases. The reaction takes place in the presence of glutamine and ATP through an activated phospho-Asp-tRNA(Asn) or phospho-Glu-tRNA(Gln). The polypeptide is Aspartyl/glutamyl-tRNA(Asn/Gln) amidotransferase subunit C (Rickettsia typhi (strain ATCC VR-144 / Wilmington)).